We begin with the raw amino-acid sequence, 87 residues long: uncharacterized protein (87 aa).

Helical transmembrane passes span 7–27 (LFFI…LYSI) and 64–84 (GINI…IPLF).

It localises to the membrane. This is an uncharacterized protein from Schizosaccharomyces pombe (strain 972 / ATCC 24843) (Fission yeast).